We begin with the raw amino-acid sequence, 711 residues long: MLNPIVRKFQYGQHTVTLETGMMARQATAAVMVSMDDTAVFVTVVGQKKAKPGQDFFPLTVNYQERTYAAGRIPGSFFRREGRPSEGETLIARLIDRPIRPLFPEGFVNEVQVIATVVSVNPQVNPDIVAMIGASAALSLSGIPFNGPIGAARVGYINDQYVLNPTQDELKESKLDLVVAGTEAAVLMVESEAQLLSEDQMLGAVVFGHEQQQVVIQNINELVKEAGKPRWDWQPEPVNEALNARVAALAEARLSDAYRITDKQERYAQVDVIKSETIATLLAEDETLDENELGEILHAIEKNVVRSRVLAGEPRIDGREKDMIRGLDVRTGVLPRTHGSALFTRGETQALVTATLGTARDAQVLDELMGERTDTFLFHYNFPPYSVGETGMVGSPKRREIGHGRLAKRGVLAVMPDMDKFPYTVRVVSEITESNGSSSMASVCGASLALMDAGVPIKAAVAGIAMGLVKEGDNYVVLSDILGDEDHLGDMDFKVAGSRDGISALQMDIKIEGITKEIMQVALNQAKGARLHILGVMEQAINAPRGDISEFAPRIHTIKINPDKIKDVIGKGGSVIRALTEETGTTIEIEDDGTVKIAATDGEKAKHAIRRIEEITAEIEVGRVYTGKVTRIVDFGAFVAIGGGKEGLVHISQIADKRVEKVTDYLQMGQEVPVKVLEVDRQGRIRLSIKEATEQSQPAAAPEAPAAEQGE.

An FFRR loop; important for RNA binding region spans residues 77 to 80; the sequence is FFRR. The interaction with RNase E stretch occupies residues 327 to 331; that stretch reads LDVRT. 2 residues coordinate Mg(2+): Asp486 and Asp492. Residues 553–612 enclose the KH domain; sequence PRIHTIKINPDKIKDVIGKGGSVIRALTEETGTTIEIEDDGTVKIAATDGEKAKHAIRRI. In terms of domain architecture, S1 motif spans 622–690; it reads GRVYTGKVTR…RQGRIRLSIK (69 aa). Positions 689 to 711 are disordered; that stretch reads IKEATEQSQPAAAPEAPAAEQGE. Over residues 694–711 the composition is skewed to low complexity; that stretch reads EQSQPAAAPEAPAAEQGE.

Belongs to the polyribonucleotide nucleotidyltransferase family. In terms of assembly, component of the RNA degradosome, which is a multiprotein complex involved in RNA processing and mRNA degradation. Interacts with RNase E (rne). Homotrimer. The homotrimer forms a ring-like structure with a central channel, where RNA molecules can bind. RNA molecules bind between neighboring subunits. Might interact with YicC. The cofactor is Mg(2+). Mn(2+) serves as cofactor.

The protein localises to the cytoplasm. It catalyses the reaction RNA(n+1) + phosphate = RNA(n) + a ribonucleoside 5'-diphosphate. Involved in mRNA degradation. Catalyzes the phosphorolysis of single-stranded polyribonucleotides processively in the 3'- to 5'-direction. Also involved, along with RNase II, in tRNA processing. RNases II and R contribute to rRNA degradation during starvation, while RNase R and PNPase are the major contributors to quality control of rRNA during steady state growth. Contributes to degradation of some small RNAs (sRNA). This chain is Polyribonucleotide nucleotidyltransferase, found in Escherichia coli (strain K12).